Here is a 295-residue protein sequence, read N- to C-terminus: 3-hydroxy-5-phosphonooxypentane-2,4-dione thiolase (295 aa).

Catalysis depends on Lys-203, which acts as the Schiff-base intermediate with substrate.

Belongs to the DeoC/FbaB aldolase family. As to quaternary structure, homodecamer.

Its subcellular location is the cytoplasm. The catalysed reaction is dihydroxyacetone phosphate + acetyl-CoA = 3-hydroxy-2,4-dioxopentyl phosphate + CoA. Its function is as follows. Involved in the degradation of phospho-AI-2, thereby terminating induction of the lsr operon and closing the AI-2 signaling cycle. Catalyzes the transfer of an acetyl moiety from 3-hydroxy-5-phosphonooxypentane-2,4-dione to CoA to form glycerone phosphate and acetyl-CoA. The polypeptide is 3-hydroxy-5-phosphonooxypentane-2,4-dione thiolase (Klebsiella pneumoniae subsp. pneumoniae (strain ATCC 700721 / MGH 78578)).